A 211-amino-acid chain; its full sequence is 3-demethoxyubiquinol 3-hydroxylase (211 aa).

6 residues coordinate Fe cation: E60, E90, H93, E142, E174, and H177.

It belongs to the COQ7 family. The cofactor is Fe cation.

The protein localises to the cell membrane. It carries out the reaction a 5-methoxy-2-methyl-3-(all-trans-polyprenyl)benzene-1,4-diol + AH2 + O2 = a 3-demethylubiquinol + A + H2O. The protein operates within cofactor biosynthesis; ubiquinone biosynthesis. Catalyzes the hydroxylation of 2-nonaprenyl-3-methyl-6-methoxy-1,4-benzoquinol during ubiquinone biosynthesis. In Acinetobacter baumannii (strain AB307-0294), this protein is 3-demethoxyubiquinol 3-hydroxylase.